The chain runs to 528 residues: ATP synthase F(1) complex catalytic subunit beta, mitochondrial (528 aa).

The N-terminal 46 residues, 1 to 46, are a transit peptide targeting the mitochondrion; it reads MLGLVGRVVAASASGALRGLSPSAPLPQAQLLLRAAPAALQPARDY. Ser106 carries O-linked (GlcNAc) serine glycosylation. N6-acetyllysine; alternate occurs at positions 124 and 161. N6-succinyllysine; alternate is present on residues Lys124 and Lys161. The residue at position 198 (Lys198) is an N6-acetyllysine. ADP is bound by residues Gly209, Val210, Gly211, Lys212, Thr213, and Val214. Position 209 (Gly209) interacts with ATP. Phosphate contacts are provided by Gly209, Val210, Gly211, Lys212, and Thr213. 4 residues coordinate ATP: Gly211, Lys212, Thr213, and Val214. Residue Thr213 coordinates Mg(2+). Position 238 (Glu238) interacts with Mg(2+). Arg239 provides a ligand contact to ATP. N6-acetyllysine; alternate occurs at positions 259 and 264. Residues Lys259 and Lys264 each carry the N6-succinyllysine; alternate modification. A Phosphothreonine modification is found at Thr312. Phosphoserine is present on Ser415. Residue Lys426 is modified to N6-acetyllysine. Residue Ser433 is modified to Phosphoserine. N6-acetyllysine is present on residues Lys480 and Lys485. Lys522 is subject to N6-acetyllysine; alternate. Lys522 is subject to N6-succinyllysine; alternate.

The protein belongs to the ATPase alpha/beta chains family. In terms of assembly, homotrimer. Component of the ATP synthase complex composed at least of ATP5F1A/subunit alpha, ATP5F1B/subunit beta, ATP5MC1/subunit c (homooctomer), MT-ATP6/subunit a, MT-ATP8/subunit 8, ATP5ME/subunit e, ATP5MF/subunit f, ATP5MG/subunit g, ATP5MK/subunit k, ATP5MJ/subunit j, ATP5F1C/subunit gamma, ATP5F1D/subunit delta, ATP5F1E/subunit epsilon, ATP5PF/subunit F6, ATP5PB/subunit b, ATP5PD/subunit d, ATP5PO/subunit OSCP. ATP synthase complex consists of a soluble F(1) head domain (subunits alpha(3) and beta(3)) - the catalytic core - and a membrane F(0) domain - the membrane proton channel (subunits c, a, 8, e, f, g, k and j). These two domains are linked by a central stalk (subunits gamma, delta, and epsilon) rotating inside the F1 region and a stationary peripheral stalk (subunits F6, b, d, and OSCP). Interacts with PPIF. Interacts with BCL2L1 isoform BCL-X(L); the interaction mediates the association of BCL2L1 isoform BCL-X(L) with the mitochondrial membrane F(1)F(0) ATP synthase and enhances neurons metabolic efficiency. Interacts with CLN5 and PPT1. Interacts with S100A1; this interaction increases F1-ATPase activity. Interacts with MTLN. Interacts with TTC5/STRAP; the interaction results in decreased mitochondrial ATP production.

It localises to the mitochondrion inner membrane. The catalysed reaction is ATP + H2O + 4 H(+)(in) = ADP + phosphate + 5 H(+)(out). Functionally, catalytic subunit beta, of the mitochondrial membrane ATP synthase complex (F(1)F(0) ATP synthase or Complex V) that produces ATP from ADP in the presence of a proton gradient across the membrane which is generated by electron transport complexes of the respiratory chain. ATP synthase complex consist of a soluble F(1) head domain - the catalytic core - and a membrane F(1) domain - the membrane proton channel. These two domains are linked by a central stalk rotating inside the F(1) region and a stationary peripheral stalk. During catalysis, ATP synthesis in the catalytic domain of F(1) is coupled via a rotary mechanism of the central stalk subunits to proton translocation. In vivo, can only synthesize ATP although its ATP hydrolase activity can be activated artificially in vitro. With the subunit alpha (ATP5F1A), forms the catalytic core in the F(1) domain. This Bos taurus (Bovine) protein is ATP synthase F(1) complex catalytic subunit beta, mitochondrial.